The sequence spans 420 residues: Gamma-glutamyl phosphate reductase (420 aa).

This sequence belongs to the gamma-glutamyl phosphate reductase family.

The protein resides in the cytoplasm. The catalysed reaction is L-glutamate 5-semialdehyde + phosphate + NADP(+) = L-glutamyl 5-phosphate + NADPH + H(+). It participates in amino-acid biosynthesis; L-proline biosynthesis; L-glutamate 5-semialdehyde from L-glutamate: step 2/2. Catalyzes the NADPH-dependent reduction of L-glutamate 5-phosphate into L-glutamate 5-semialdehyde and phosphate. The product spontaneously undergoes cyclization to form 1-pyrroline-5-carboxylate. The polypeptide is Gamma-glutamyl phosphate reductase (Neisseria meningitidis serogroup A / serotype 4A (strain DSM 15465 / Z2491)).